The sequence spans 241 residues: Tryptophan synthase alpha chain (241 aa).

Active-site proton acceptor residues include glutamate 31 and aspartate 42.

The protein belongs to the TrpA family. Tetramer of two alpha and two beta chains.

It catalyses the reaction (1S,2R)-1-C-(indol-3-yl)glycerol 3-phosphate + L-serine = D-glyceraldehyde 3-phosphate + L-tryptophan + H2O. It functions in the pathway amino-acid biosynthesis; L-tryptophan biosynthesis; L-tryptophan from chorismate: step 5/5. Functionally, the alpha subunit is responsible for the aldol cleavage of indoleglycerol phosphate to indole and glyceraldehyde 3-phosphate. The polypeptide is Tryptophan synthase alpha chain (Staphylococcus saprophyticus subsp. saprophyticus (strain ATCC 15305 / DSM 20229 / NCIMB 8711 / NCTC 7292 / S-41)).